A 142-amino-acid chain; its full sequence is Large ribosomal subunit protein uL11 (142 aa).

Belongs to the universal ribosomal protein uL11 family. As to quaternary structure, part of the ribosomal stalk of the 50S ribosomal subunit. Interacts with L10 and the large rRNA to form the base of the stalk. L10 forms an elongated spine to which L12 dimers bind in a sequential fashion forming a multimeric L10(L12)X complex. In terms of processing, one or more lysine residues are methylated.

Functionally, forms part of the ribosomal stalk which helps the ribosome interact with GTP-bound translation factors. In Bradyrhizobium sp. (strain BTAi1 / ATCC BAA-1182), this protein is Large ribosomal subunit protein uL11.